Here is a 138-residue protein sequence, read N- to C-terminus: Protein NrdI (138 aa).

Belongs to the NrdI family.

In terms of biological role, probably involved in ribonucleotide reductase function. The polypeptide is Protein NrdI (Paracoccus denitrificans (strain Pd 1222)).